The sequence spans 324 residues: NADH-ubiquinone oxidoreductase chain 1 (324 aa).

Transmembrane regions (helical) follow at residues 9-29 (LINPLAYAVPVLIAVAFLTLV), 75-95 (ILFLTAPVLALILAMMLWAPM), 106-126 (LGILFIMAISSLAVYSILGSG), 146-166 (ISYEVSLGLILLSAVIFSGGY), 178-198 (TWLLLPLWPLAIMWFISTLAE), 212-232 (ELVSGFNVEYAAGPFALFFLA), 259-279 (ELMTISIATKTAMLSILFLWM), and 299-319 (FLPITLVLVLWHIALPIALAG).

It belongs to the complex I subunit 1 family. Core subunit of respiratory chain NADH dehydrogenase (Complex I) which is composed of 45 different subunits.

It localises to the mitochondrion inner membrane. The enzyme catalyses a ubiquinone + NADH + 5 H(+)(in) = a ubiquinol + NAD(+) + 4 H(+)(out). Its function is as follows. Core subunit of the mitochondrial membrane respiratory chain NADH dehydrogenase (Complex I) which catalyzes electron transfer from NADH through the respiratory chain, using ubiquinone as an electron acceptor. Essential for the catalytic activity and assembly of complex I. In Danio rerio (Zebrafish), this protein is NADH-ubiquinone oxidoreductase chain 1 (mt-nd1).